The primary structure comprises 162 residues: Phenazine biosynthesis protein PhzB1 (162 aa).

This sequence belongs to the PhzA/PhzB family. In terms of assembly, homodimer.

Its pathway is antibiotic biosynthesis; phenazine biosynthesis. Functionally, involved in the biosynthesis of the antibiotic phenazine, a nitrogen-containing heterocyclic molecule. PhzB1 (operon phzA1B1C1E1F1G1) has a role in the biosynthesis of the phenazine during planktonic growth. The sequence is that of Phenazine biosynthesis protein PhzB1 from Pseudomonas aeruginosa (strain ATCC 15692 / DSM 22644 / CIP 104116 / JCM 14847 / LMG 12228 / 1C / PRS 101 / PAO1).